We begin with the raw amino-acid sequence, 2545 residues long: Methylphloroacetophenone synthase (2545 aa).

The tract at residues 8-261 (AFGALAPWPA…HVAIHEGIPQ (254 aa)) is N-terminal acylcarrier protein transacylase (SAT) domain. Residues 383 to 798 (KDAIAIIGMG…GSNAAMIVLE (416 aa)) enclose the Ketosynthase family 3 (KS3) domain. Residues Cys547, His682, and His721 each act as for beta-ketoacyl synthase activity in the active site. Residues 914–1218 (LCFGGQVSDR…VSLQLNKPNS (305 aa)) form a malonyl-CoA:ACP transacylase (MAT) domain region. The For acyl/malonyl transferase activity role is filled by Ser1001. Residues 1293–1423 (LPAVLIRLKS…GTVNLKVADD (131 aa)) are N-terminal hotdog fold. The region spanning 1293–1605 (LPAVLIRLKS…FTDIRRPVPI (313 aa)) is the PKS/mFAS DH domain. The segment at 1296–1604 (VLIRLKSFDS…NFTDIRRPVP (309 aa)) is product template (PT) domain. Residues 1449–1605 (RSESLRGNVL…FTDIRRPVPI (157 aa)) form a C-terminal hotdog fold region. Residues 1657–1731 (TSIYEDICGL…SLVDYLHGKG (75 aa)) form the Carrier domain. Position 1691 is an O-(pantetheine 4'-phosphoryl)serine (Ser1691). Low complexity predominate over residues 1748 to 1768 (SSSHAISTGASSPPDSSGASA). The interval 1748–1773 (SSSHAISTGASSPPDSSGASAMTTPP) is disordered. The segment at 1931 to 2163 (FGASETKLLN…GFKHVSWTDG (233 aa)) is methyltransferase (CMeT) domain. Positions 2198–2544 (AGVPMEEVVW…YDFICRQLGM (347 aa)) are claisen cyclase (CLC) domain. Active-site for thioesterase activity residues include Ser2321, Asp2481, and His2513.

Methylphloroacetophenone synthase; part of the gene cluster that mediates the biosynthesis of usnic acid, a dibenzofuran lichen product possessing a broad spectrum of biological activities. Two genes, mpas and mpao, comprise the usnic acid biosynthetic gene cluster with a single post-PKS enzyme, the methylphloracetophenone oxidase (mpao). The methylphloroacetophenone synthase (mpas) is a non-reducing polyketide synthase that produces methylphloracetophenone from acetate via a methylated tetraketide intermediate. The methylphloroacetophenone oxidase then carries out the oxidative dimerization of methylphloracetophenone to usnic acid. This is Methylphloroacetophenone synthase from Cladonia uncialis (Cup lichen).